A 1113-amino-acid chain; its full sequence is Atrial natriuretic peptide-converting enzyme (1113 aa).

The Cytoplasmic portion of the chain corresponds to 1-112 (MGRVSFSVRV…QKLVTANLLR (112 aa)). A helical; Signal-anchor for type II membrane protein membrane pass occupies residues 113–133 (FLLLVLIPCICALIVLLAILL). Topologically, residues 134 to 1113 (SFVGTLKRVY…QTFLQKKSQG (980 aa)) are extracellular. N-linked (GlcNAc...) asparagine glycans are attached at residues N147, N202, and N208. The tract at residues 176–202 (APSLPPSQSTPAWTPRAPSPEDQSHRN) is disordered. One can recognise an FZ 1 domain in the interval 201 to 327 (RNTSTCMNIT…SSVRKSCFSL (127 aa)). Cystine bridges form between C206–C266, C214–C259, C250–C290, C279–C324, C283–C307, C337–C350, C345–C363, and C357–C372. N298 and N317 each carry an N-linked (GlcNAc...) asparagine glycan. 4 consecutive LDL-receptor class A domains span residues 336 to 372 (LCGG…EAHC), 373 to 408 (NCSK…EQNC), 409 to 445 (DCNL…EVNC), and 446 to 483 (SCHS…ENCS). N373 carries an N-linked (GlcNAc...) asparagine glycan. 9 disulfide bridges follow: C374–C386, C381–C399, C393–C408, C410–C423, C418–C436, C430–C445, C447–C460, C455–C473, and C467–C482. N411 is a glycosylation site (N-linked (GlcNAc...) asparagine). N-linked (GlcNAc...) asparagine glycosylation is present at N444. 3 N-linked (GlcNAc...) asparagine glycosylation sites follow: N481, N519, and N537. The FZ 2 domain occupies 518-641 (SNCSQCEPIT…SSDNQTCLLP (124 aa)). Cystine bridges form between C523-C586, C531-C579, C570-C608, C597-C638, C601-C625, C648-C660, C655-C673, C667-C682, C684-C698, C692-C711, C705-C720, C723-C735, C730-C748, and C742-C757. N635 carries N-linked (GlcNAc...) asparagine glycosylation. LDL-receptor class A domains lie at 647–682 (ECSP…EENC), 683–721 (GCKE…KNCS), and 722–757 (FCQD…EWGC). N719 carries an N-linked (GlcNAc...) asparagine glycan. The 96-residue stretch at 758–853 (VTLSKNGNSS…SRSEISLLCS (96 aa)) folds into the SRCR domain. Residues N765 and N828 are each glycosylated (N-linked (GlcNAc...) asparagine). 6 disulfides stabilise this stretch: C782/C884, C857/C979, C895/C911, C993/C1058, C1022/C1037, and C1048/C1077. One can recognise a Peptidase S1 domain in the interval 869 to 1102 (ILGGRTSRPG…FVGWIERQIY (234 aa)). Active-site charge relay system residues include H910 and D959. N-linked (GlcNAc...) asparagine glycosylation occurs at N970. S1052 (charge relay system) is an active-site residue. N-linked (GlcNAc...) asparagine glycosylation occurs at N1089.

Belongs to the peptidase S1 family. In terms of processing, N-glycosylated; required for processing and activation. Activated through proteolytic processing by a trypsin-like protease; cleaved into a N-terminal propeptide and an activated corin protease fragment. Atrial natriuretic peptide-converting enzyme, 180 kDa soluble fragment is produced by cleavage by ADAM10. Cleavage by ADAM10 to produce soluble 180 kDa soluble fragment takes place after the transmembrane region and before FZ 1. Post-translationally, a disulfide bond links the activated corin protease fragment and the N-terminal propeptide. The disulfide bond also links the activated corin protease fragment with Atrial natriuretic peptide-converting enzyme, 180 kDa soluble fragment. As to expression, highly expressed in heart. Also expressed in pregnant uterus.

It localises to the cell membrane. The protein localises to the secreted. Serine-type endopeptidase involved in atrial natriuretic peptide (NPPA) processing. Converts through proteolytic cleavage the non-functional propeptide NPPA into the active hormone, thereby regulating blood pressure in heart and promoting natriuresis, diuresis and vasodilation. Proteolytic cleavage of pro-NPPA also plays a role in female pregnancy by promoting trophoblast invasion and spiral artery remodeling in uterus. Also acts as a regulator of sodium reabsorption in kidney. May also process pro-NPPB the B-type natriuretic peptide. The protein is Atrial natriuretic peptide-converting enzyme (Corin) of Mus musculus (Mouse).